We begin with the raw amino-acid sequence, 267 residues long: Diphthine--ammonia ligase (267 aa).

Y97 is modified (phosphotyrosine).

This sequence belongs to the Diphthine--ammonia ligase family.

It carries out the reaction diphthine-[translation elongation factor 2] + NH4(+) + ATP = diphthamide-[translation elongation factor 2] + AMP + diphosphate + H(+). The protein operates within protein modification; peptidyl-diphthamide biosynthesis. Its function is as follows. Amidase that may catalyze the last step of diphthamide biosynthesis using ammonium and ATP. Diphthamide biosynthesis consists in the conversion of an L-histidine residue in the translation elongation factor (EEF2) to diphthamide. The protein is Diphthine--ammonia ligase of Homo sapiens (Human).